We begin with the raw amino-acid sequence, 134 residues long: MNELVRGLTNLRSLRAAVRELTLEQAENALEKLQTAIEEKRANEAELIKAETERKERLAKYKELMEKEGITPEELHEIFGTKTVSIRAKRAPRPAKYAFIDENGEHKTWTGQGRTPRPIQNALNKGKSLSDFEI.

A disordered region spans residues 106-134 (HKTWTGQGRTPRPIQNALNKGKSLSDFEI). Residues 112-117 (QGRTPR) mediate DNA binding.

It belongs to the histone-like protein H-NS family. Homodimer that oligomerizes on DNA into higher-order complexes that form bridges between disparate regions of DNA compacting it.

Its subcellular location is the cytoplasm. It localises to the nucleoid. Functionally, a DNA-binding protein implicated in transcriptional repression and chromosome organization and compaction. Binds nucleation sites in AT-rich DNA and bridges them, forming higher-order nucleoprotein complexes and condensing the chromosome. As many horizontally transferred genes are AT-rich, it plays a central role in silencing foreign genes. A subset of genes are repressed by H-NS in association with other proteins. The sequence is that of DNA-binding protein H-NS homolog (hns) from Haemophilus influenzae (strain ATCC 51907 / DSM 11121 / KW20 / Rd).